Consider the following 571-residue polypeptide: MYYMLIGFIIVVIAVIGAGYILKRKHYQRINELEEKKIKLRERPVIDELSKVKKLKLTGQTEALFESWRSSWDEIETRLFPDLEEVLLEAEMNTDRYKFRSATNAENDIEQMLVVIEKQMDQILGGLKELLISEEKNAKESRATKEKFAELRREVLTRGFKLGETLPYVEAKLNELSESLNSYDSLTDQGDHLEAREIVIVVQKEMQVIEAQMERIPSLLHETDTILPEEMNKLRAGYEEMVRKGYYLAQMELDKEISRMKNQIDKMKKNVINLDLDEAEQGVEELHNEIDLFYDTLEHEAEARHFVKENHSPTSDKLQRQNAVSDALAEQITEVKQTYHVAEDDLAVYLKTSAKLSEAKENFEQLTTLIASGEIAYSAAQDTLKEIDAALITISAEQDKFAEELRSLRKDELEARDDAERMRRAIITLDRKMERERLPGLPEEYLSLREHMGESIDTLEKRLEEKPLNMKAVSQDWRIAEEDLIHLTEKAEEMMENVRLVEHVIQYANRYRLRNKELADELVQAENHFYNDYQYKKALEIAVTALEKVETGAFKKVEKAYASKVSVDDIE.

The Extracellular segment spans residues 1 to 3 (MYY). The chain crosses the membrane as a helical span at residues 4–22 (MLIGFIIVVIAVIGAGYIL). At 23 to 571 (KRKHYQRINE…ASKVSVDDIE (549 aa)) the chain is on the cytoplasmic side. 5 coiled-coil regions span residues 102 to 147 (ATNA…TKEK), 248 to 298 (LAQM…DTLE), 326 to 374 (DALA…ASGE), 400 to 437 (KFAE…ERER), and 478 to 529 (RIAE…ENHF).

Belongs to the EzrA family.

The protein resides in the cell membrane. Its function is as follows. Negative regulator of FtsZ ring formation; modulates the frequency and position of FtsZ ring formation. Inhibits FtsZ ring formation at polar sites. Interacts either with FtsZ or with one of its binding partners to promote depolymerization. This chain is Septation ring formation regulator EzrA, found in Listeria monocytogenes serotype 4a (strain HCC23).